The chain runs to 715 residues: Inducible lysine decarboxylase (715 aa).

The residue at position 367 (Lys-367) is an N6-(pyridoxal phosphate)lysine.

Belongs to the Orn/Lys/Arg decarboxylase class-I family. As to quaternary structure, homodecamer. Interacts with RavA. It depends on pyridoxal 5'-phosphate as a cofactor.

The protein resides in the cytoplasm. It carries out the reaction L-lysine + H(+) = cadaverine + CO2. The chain is Inducible lysine decarboxylase (cadA) from Escherichia coli O157:H7.